Reading from the N-terminus, the 402-residue chain is CinA-like protein (402 aa).

Belongs to the CinA family.

This chain is CinA-like protein, found in Escherichia coli O17:K52:H18 (strain UMN026 / ExPEC).